The sequence spans 1690 residues: Lysine-specific demethylase 5A (1690 aa).

One can recognise a JmjN domain in the interval 19 to 60 (CPVFEPSWEEFTDPLSFIGRIRPLAEKTGICKIRPPKDWQPP). The ARID domain maps to 84–174 (TRVRLDFLDQ…ILYPYELFQS (91 aa)). A Glycyl lysine isopeptide (Lys-Gly) (interchain with G-Cter in SUMO2) cross-link involves residue Lys-191. Position 204 is a phosphoserine (Ser-204). Residues 293–343 (LYVCMFCGRGNNEDKLLLCDGCDDSYHTFCLIPPLPDVPKGDWRCPKCVAE) form a PHD-type 1 zinc finger. Tyr-409 contributes to the 2-oxoglutarate binding site. Positions 419–423 (GSGFP) match the GSGFP motif motif. The JmjC domain maps to 437 to 603 (EYALSGWNLN…IGRQCVNHYR (167 aa)). Fe cation-binding residues include His-483 and Glu-485. 2-oxoglutarate is bound by residues Ser-491, Asn-493, and Lys-501. A Fe cation-binding site is contributed by His-571. The C5HC2 zinc finger occupies 676 to 728 (CSACRTTCFLSALTCSCNPERLVCLYHPTDLCPCPMQKKCLRYRYPLEDLPSL). Residue Lys-1007 forms a Glycyl lysine isopeptide (Lys-Gly) (interchain with G-Cter in SUMO2) linkage. Phosphoserine is present on Ser-1111. Residues 1161 to 1218 (VKFCICRKTASGFMLQCELCKDWFHNSCVPLPKSSSQKKGSSWQAKEVKFLCPLCMRS) form a PHD-type 2 zinc finger. Disordered stretches follow at residues 1327-1348 (SVSS…SDED) and 1407-1433 (KSCS…LEPP). Ser-1330 and Ser-1331 each carry phosphoserine. Residues 1337-1348 (DYDDEETDSDED) show a composition bias toward acidic residues. Residue Thr-1343 is modified to Phosphothreonine. At Ser-1345 the chain carries Phosphoserine. Phosphoserine is present on residues Ser-1438 and Ser-1488. Composition is skewed to basic and acidic residues over residues 1490 to 1503 (EEKP…DSSE) and 1520 to 1530 (GKQKSKELKKM). Disordered stretches follow at residues 1490 to 1509 (EEKP…RKRK) and 1516 to 1543 (LFGE…LGAD). The residue at position 1595 (Tyr-1595) is a Phosphotyrosine. Ser-1598 and Ser-1603 each carry phosphoserine. The segment at 1607–1661 (NAVCAAQNCQRPCKDKVDWVQCDGGCDEWFHQVCVGVSPEMAENEDYICINCAKK) adopts a PHD-type 3 zinc-finger fold. Residues 1623 to 1690 (VDWVQCDGGC…LPMEDLKETS (68 aa)) are interaction with LMO2. Ser-1666 is modified (phosphoserine).

This sequence belongs to the JARID1 histone demethylase family. As to quaternary structure, interacts with SUZ12; the interaction is direct. Interacts with the viral protein-binding domain of RB1. Interacts with ESR1, MYC, MYCN and LMO2. Interacts with HDAC1; this interaction impairs histone deacetylation by HDAC1. Interacts with BMAL1 and CLOCK. Interacts (via PHD-type 1 zinc finger) with histone H3 unmodified at 'Lys-4' and (via PHD-type 3 zinc finger) with histone H3 di- and trimethylated at 'Lys-4'. Requires Fe(2+) as cofactor.

It is found in the nucleus. The protein resides in the nucleolus. It carries out the reaction N(6),N(6),N(6)-trimethyl-L-lysyl(4)-[histone H3] + 3 2-oxoglutarate + 3 O2 = L-lysyl(4)-[histone H3] + 3 formaldehyde + 3 succinate + 3 CO2. Its activity is regulated as follows. The inhibitors KDOAM-25, CPI-455 and others inhibits its demethylase activity, resulting to cell growth arrest in cancer cells. In terms of biological role, histone demethylase that specifically demethylates 'Lys-4' of histone H3, thereby playing a central role in histone code. Does not demethylate histone H3 'Lys-9', H3 'Lys-27', H3 'Lys-36', H3 'Lys-79' or H4 'Lys-20'. Demethylates trimethylated and dimethylated but not monomethylated H3 'Lys-4'. Regulates specific gene transcription through DNA-binding on 5'-CCGCCC-3' motif. May stimulate transcription mediated by nuclear receptors. Involved in transcriptional regulation of Hox proteins during cell differentiation. May participate in transcriptional repression of cytokines such as CXCL12. Plays a role in the regulation of the circadian rhythm and in maintaining the normal periodicity of the circadian clock. In a histone demethylase-independent manner, acts as a coactivator of the CLOCK-BMAL1-mediated transcriptional activation of PER1/2 and other clock-controlled genes and increases histone acetylation at PER1/2 promoters by inhibiting the activity of HDAC1. Seems to act as a transcriptional corepressor for some genes such as MT1F and to favor the proliferation of cancer cells. The sequence is that of Lysine-specific demethylase 5A from Homo sapiens (Human).